The primary structure comprises 813 residues: Leucine--tRNA ligase (813 aa).

The short motif at 41–51 is the 'HIGH' region element; that stretch reads PYPSGTLHMGH. Residues 575-579 carry the 'KMSKS' region motif; sequence KMSKS. Residue lysine 578 coordinates ATP.

This sequence belongs to the class-I aminoacyl-tRNA synthetase family.

It is found in the cytoplasm. The catalysed reaction is tRNA(Leu) + L-leucine + ATP = L-leucyl-tRNA(Leu) + AMP + diphosphate. This is Leucine--tRNA ligase from Francisella tularensis subsp. tularensis (strain WY96-3418).